The sequence spans 332 residues: Adenosine receptor A2b (332 aa).

At 1-8 (MLLETQDA) the chain is on the extracellular side. Residues 9–33 (LYVALELVIAALSVAGNVLVCAAVG) traverse the membrane as a helical segment. At 34-43 (TANTLQTPTN) the chain is on the cytoplasmic side. A helical transmembrane segment spans residues 44–67 (YFLVSLAAADVAVGLFAIPFAITI). Topologically, residues 68–78 (SLGFCTDFYGC) are extracellular. Cysteine 78 and cysteine 171 are oxidised to a cystine. Residues 79–101 (LFLACFVLVLTQSSIFSLLAVAV) form a helical membrane-spanning segment. Residues 102 to 121 (DRYLAICVPLRYKSLVTGTR) are Cytoplasmic-facing. A helical transmembrane segment spans residues 122–144 (ARGVIAVLWVLAFGIGLTPFLGW). Residues 145 to 178 (NSKDSATNNCTEPWDGTTNESCCLVKCLFENVVP) lie on the Extracellular side of the membrane. N-linked (GlcNAc...) asparagine glycosylation is found at asparagine 153 and asparagine 163. Position 174 (glutamate 174) interacts with adenosine. Residues 179–203 (MSYMVYFNFFGCVLPPLLIMLVIYI) traverse the membrane as a helical segment. Topologically, residues 204 to 235 (KIFLVACRQLQRTELMDHSRTTLQREIHAAKS) are cytoplasmic. A helical transmembrane segment spans residues 236-259 (LAMIVGIFALCWLPVHAVNCVTLF). Asparagine 254 contributes to the adenosine binding site. Over 260–267 (QPAQGKNK) the chain is Extracellular. Residues 268 to 291 (PKWAMNMAILLSHANSVVNPIVYA) traverse the membrane as a helical segment. Residues serine 279 and histidine 280 each contribute to the adenosine site. Over 292-332 (YRNRDFRYTFHKIISRYLLCQADVKSGNGQAGVQPALGVGL) the chain is Cytoplasmic. Residue cysteine 311 is the site of S-palmitoyl cysteine attachment.

The protein belongs to the G-protein coupled receptor 1 family.

The protein localises to the cell membrane. Its function is as follows. Receptor for adenosine. The activity of this receptor is mediated by G proteins which activate adenylyl cyclase. In Homo sapiens (Human), this protein is Adenosine receptor A2b (ADORA2B).